A 246-amino-acid polypeptide reads, in one-letter code: Triosephosphate isomerase (246 aa).

Substrate is bound at residue 9–11; the sequence is NWK. Residue His-91 is the Electrophile of the active site. Residue Glu-161 is the Proton acceptor of the active site. Substrate-binding positions include Gly-167, Ser-206, and 227–228; that span reads GG.

Belongs to the triosephosphate isomerase family. As to quaternary structure, homodimer.

Its subcellular location is the cytoplasm. It catalyses the reaction D-glyceraldehyde 3-phosphate = dihydroxyacetone phosphate. The protein operates within carbohydrate biosynthesis; gluconeogenesis. It functions in the pathway carbohydrate degradation; glycolysis; D-glyceraldehyde 3-phosphate from glycerone phosphate: step 1/1. Functionally, involved in the gluconeogenesis. Catalyzes stereospecifically the conversion of dihydroxyacetone phosphate (DHAP) to D-glyceraldehyde-3-phosphate (G3P). This chain is Triosephosphate isomerase, found in Ruegeria sp. (strain TM1040) (Silicibacter sp.).